Reading from the N-terminus, the 208-residue chain is GATA transcription factor 20 (208 aa).

A GATA-type zinc finger spans residues 94–119; that stretch reads CASCDTTSTPLWRNGPKGPKSLCNAC.

It belongs to the type IV zinc-finger family. Class B subfamily.

The protein resides in the nucleus. Transcriptional regulator that specifically binds 5'-GATA-3' or 5'-GAT-3' motifs within gene promoters. The sequence is that of GATA transcription factor 20 from Arabidopsis thaliana (Mouse-ear cress).